The following is a 475-amino-acid chain: Probable proline--tRNA ligase, mitochondrial (475 aa).

Residues 1–29 (MEGLLTRCRALPALATCSRQLSGYVPCRF) constitute a mitochondrion transit peptide.

This sequence belongs to the class-II aminoacyl-tRNA synthetase family.

The protein resides in the mitochondrion matrix. It carries out the reaction tRNA(Pro) + L-proline + ATP = L-prolyl-tRNA(Pro) + AMP + diphosphate. Functionally, mitochondrial aminoacyl-tRNA synthetase that catalyzes the specific attachment of the proline amino acid (aa) to the homologous transfer RNA (tRNA), further participating in protein synthesis. The reaction occurs in a two steps: proline is first activated by ATP to form Pro-AMP and then transferred to the acceptor end of tRNA(Pro). The chain is Probable proline--tRNA ligase, mitochondrial from Homo sapiens (Human).